Reading from the N-terminus, the 132-residue chain is Small ribosomal subunit protein uS8 (132 aa).

Belongs to the universal ribosomal protein uS8 family. As to quaternary structure, part of the 30S ribosomal subunit. Contacts proteins S5 and S12.

In terms of biological role, one of the primary rRNA binding proteins, it binds directly to 16S rRNA central domain where it helps coordinate assembly of the platform of the 30S subunit. The polypeptide is Small ribosomal subunit protein uS8 (Psychrobacter cryohalolentis (strain ATCC BAA-1226 / DSM 17306 / VKM B-2378 / K5)).